A 1085-amino-acid polypeptide reads, in one-letter code: Kinesin-like protein cut7 (1085 aa).

The segment at 1 to 70 (MAPRVAPGGS…TDHALHDENE (70 aa)) is disordered. Residues 24-37 (PVSTPNSHFRSASN) show a composition bias toward polar residues. The 350-residue stretch at 72-421 (NINVVVRVRG…LEYAARAKSI (350 aa)) folds into the Kinesin motor domain. ATP is bound at residue 159 to 166 (GQTGTGKT). Coiled-coil stretches lie at residues 436 to 604 (LIKD…WNLK), 715 to 740 (ISSE…LRSL), and 897 to 955 (LALA…DSIK). Repeats lie at residues 987 to 998 (DESLCNLETTIE) and 999 to 1010 (DTSLVKLETTGD). A Phosphothreonine; by CDC2 modification is found at T1011. The interval 1049–1085 (YTSSNQTNEPDVYDKPSNSSRTSLLRSSRSAYSKMKR) is disordered. A compositionally biased stretch (low complexity) spans 1065 to 1078 (SNSSRTSLLRSSRS).

The protein belongs to the TRAFAC class myosin-kinesin ATPase superfamily. Kinesin family. BimC subfamily.

It is found in the cytoplasm. It localises to the cytoskeleton. Its subcellular location is the microtubule organizing center. The protein resides in the spindle pole body. Could be a spindle pole body motor. On transition from G2 to M phase of the cell cycle, the spindle pole body duplicates; the daughter pole bodies seed microtubules which interdigitate to form a short spindle that elongates to span the nucleus at metaphase. Mutations at cut7 block spindle formation. The chain is Kinesin-like protein cut7 (cut7) from Schizosaccharomyces pombe (strain 972 / ATCC 24843) (Fission yeast).